A 505-amino-acid polypeptide reads, in one-letter code: RNA-splicing ligase RtcB homolog (505 aa).

Residues Asp-119, Cys-122, His-227, and His-259 each coordinate Mn(2+). Residue 226–230 participates in GMP binding; sequence NHYAE. Ser-300 is modified (phosphoserine). His-353 lines the Mn(2+) pocket. Residues 353-354, 402-405, Ser-409, and 428-431 each bind GMP; these read HN, GGTM, and HGAG. The active-site GMP-histidine intermediate is the His-428. A Glycyl lysine isopeptide (Lys-Gly) (interchain with G-Cter in SUMO2) cross-link involves residue Lys-496. Lys-504 is a binding site for GMP.

The protein belongs to the RtcB family. As to quaternary structure, catalytic component of the tRNA-splicing ligase complex. The cofactor is Mn(2+).

The protein resides in the nucleus. The protein localises to the cytoplasm. It carries out the reaction a 3'-end 3'-phospho-ribonucleotide-RNA + a 5'-end dephospho-ribonucleoside-RNA + GTP = a ribonucleotidyl-ribonucleotide-RNA + GMP + diphosphate. It catalyses the reaction a 3'-end 2',3'-cyclophospho-ribonucleotide-RNA + a 5'-end dephospho-ribonucleoside-RNA + GTP + H2O = a ribonucleotidyl-ribonucleotide-RNA + GMP + diphosphate + H(+). Catalytic subunit of the tRNA-splicing ligase complex that acts by directly joining spliced tRNA halves to mature-sized tRNAs by incorporating the precursor-derived splice junction phosphate into the mature tRNA as a canonical 3',5'-phosphodiester. May act as an RNA ligase with broad substrate specificity, and may function toward other RNAs. The chain is RNA-splicing ligase RtcB homolog from Rattus norvegicus (Rat).